A 292-amino-acid polypeptide reads, in one-letter code: NAC domain-containing protein 105 (292 aa).

The NAC domain maps to 12-162 (IPPGFRFHPT…GWVVCRAFKK (151 aa)). A DNA-binding region spans residues 112–168 (IGMRKTLVFYRGRAPNGQKSDWIIHEYYSLESHQNSPPQEEGWVVCRAFKKRTTIPT). Polar residues predominate over residues 237–259 (LPQLESPSLPSEITPHSTTFSEN). Residues 237 to 269 (LPQLESPSLPSEITPHSTTFSENSSRKDDMSSE) are disordered. The segment covering 260 to 269 (SSRKDDMSSE) has biased composition (basic and acidic residues).

This sequence belongs to the plant vascular related NAC-domain protein family. As to quaternary structure, interacts with NAC030/VND7. As to expression, detected in root protoxylem and metaxylem poles and in vessels of protoxylems, outermost metaxylems, inner metaxylems, shoots and hypocotyls. Expressed in roots, hypocotyls, cotyledons and leaves. Present in developing xylems. Present in root developing xylems. Specifically expressed in vessels but not in interfascicular fibers in stems.

Its subcellular location is the nucleus. Functionally, transcription activator that binds to the secondary wall NAC binding element (SNBE), 5'-(T/A)NN(C/T)(T/C/G)TNNNNNNNA(A/C)GN(A/C/T)(A/T)-3', in the promoter of target genes. Involved in xylem formation by promoting the expression of secondary wall-associated transcription factors and of genes involved in secondary wall biosynthesis and programmed cell death, genes driven by the secondary wall NAC binding element (SNBE). Triggers thickening of secondary walls. In Arabidopsis thaliana (Mouse-ear cress), this protein is NAC domain-containing protein 105.